The chain runs to 183 residues: MGLEIVIKDIQEGARAEVSRINTEADAKASEITNEAKEVQKKMLGDSLAKVEEDLQKLHQQVISSANLEVKRITLNKRKELLDNVYSQTVESIKSMPASKNEKLLKHIIDKYEASGDKIYSSKASEETVRKLSSLTYAGNIDCIGGVVLENEDGTVRLDYTYDSILKNVYERSLKQISDILYG.

This sequence belongs to the V-ATPase E subunit family. Has multiple subunits with at least A(3), B(3), C, D, E, F, H, I and proteolipid K(x).

The protein localises to the cell membrane. In terms of biological role, component of the A-type ATP synthase that produces ATP from ADP in the presence of a proton gradient across the membrane. This is A-type ATP synthase subunit E from Methanosarcina acetivorans (strain ATCC 35395 / DSM 2834 / JCM 12185 / C2A).